Consider the following 388-residue polypeptide: 3beta-hydroxysteroid dehydrogenase dhs-16 (388 aa).

Residues 2-22 (LELIYILPLLCFVYFLFRRFV) form a helical membrane-spanning segment. Tyr188 serves as the catalytic Proton acceptor. A run of 2 helical transmembrane segments spans residues 300-320 (AIFMFIPLSIFPTALQDWILA) and 346-366 (IQWIQFLSQIAIIPLLYTIFF).

Belongs to the short-chain dehydrogenases/reductases (SDR) family. In terms of tissue distribution, strongly expressed in the hypodermis and posterior pharyngeal bulb and in a number of unidentified neurons of the head and tail.

The protein resides in the membrane. It catalyses the reaction lathosterol + NAD(+) = 5alpha-cholest-7-en-3-one + NADH + H(+). It functions in the pathway steroid hormone biosynthesis; dafachronic acid biosynthesis. 3beta-hydroxysteroid dehydrogenase that converts 3beta-hydroxysteroids to 3-ketosteroids, an essential step in the production of dafachronic acids from cholesterol. Catalyzes the dehydrogenation of lathosterol (5alpha-cholest-7-en-3beta-ol) to lathosterone (5alpha-cholest-7-en-3-one), a step required for maximal biosynthesis of Delta(7)-dafachronic acid. Dafachronic acids act as ligands and bind directly to the nuclear hormone receptor (NHR) daf-12, suppressing dauer formation and inducing reproductive growth, they can also regulate C.elegans lifespan. This Caenorhabditis elegans protein is 3beta-hydroxysteroid dehydrogenase dhs-16 (dhs-16).